Reading from the N-terminus, the 495-residue chain is 3-octaprenyl-4-hydroxybenzoate carboxy-lyase (495 aa).

Asn172 is a Mn(2+) binding site. Residues 175 to 177 (IYR), 189 to 191 (RWL), and 194 to 195 (RG) each bind prenylated FMN. Mn(2+) is bound at residue Glu238. Catalysis depends on Asp287, which acts as the Proton donor.

It belongs to the UbiD family. As to quaternary structure, homohexamer. Prenylated FMN is required as a cofactor. Requires Mn(2+) as cofactor.

It is found in the cell membrane. The catalysed reaction is a 4-hydroxy-3-(all-trans-polyprenyl)benzoate + H(+) = a 2-(all-trans-polyprenyl)phenol + CO2. The protein operates within cofactor biosynthesis; ubiquinone biosynthesis. In terms of biological role, catalyzes the decarboxylation of 3-octaprenyl-4-hydroxy benzoate to 2-octaprenylphenol, an intermediate step in ubiquinone biosynthesis. The protein is 3-octaprenyl-4-hydroxybenzoate carboxy-lyase of Edwardsiella ictaluri (strain 93-146).